Consider the following 298-residue polypeptide: ATP phosphoribosyltransferase (298 aa).

This sequence belongs to the ATP phosphoribosyltransferase family.

It is found in the cytoplasm. It carries out the reaction 1-(5-phospho-beta-D-ribosyl)-ATP + diphosphate = 5-phospho-alpha-D-ribose 1-diphosphate + ATP. Its pathway is amino-acid biosynthesis; L-histidine biosynthesis; L-histidine from 5-phospho-alpha-D-ribose 1-diphosphate: step 1/9. Functionally, catalyzes the condensation of ATP and 5-phosphoribose 1-diphosphate to form N'-(5'-phosphoribosyl)-ATP (PR-ATP). Has a crucial role in the pathway because the rate of histidine biosynthesis seems to be controlled primarily by regulation of the enzymatic activity. This chain is ATP phosphoribosyltransferase (HIS1), found in Candida albicans (strain SC5314 / ATCC MYA-2876) (Yeast).